A 368-amino-acid polypeptide reads, in one-letter code: Epoxyqueuosine reductase QueH (368 aa).

Cys-6, Cys-7, Cys-87, and Cys-90 together coordinate [4Fe-4S] cluster. Cys-174 and Cys-176 are oxidised to a cystine.

Belongs to the QueH family.

It catalyses the reaction epoxyqueuosine(34) in tRNA + AH2 = queuosine(34) in tRNA + A + H2O. It participates in tRNA modification; tRNA-queuosine biosynthesis. Catalyzes the conversion of epoxyqueuosine (oQ) to queuosine (Q), which is a hypermodified base found in the wobble positions of tRNA(Asp), tRNA(Asn), tRNA(His) and tRNA(Tyr). This Helicobacter pylori (strain ATCC 700392 / 26695) (Campylobacter pylori) protein is Epoxyqueuosine reductase QueH.